A 300-amino-acid chain; its full sequence is Cell adhesion molecule CEACAM19 (300 aa).

The first 32 residues, 1 to 32 (MEIPMGTQGCFSKSLLLSASILVLWMLQGSQA), serve as a signal peptide directing secretion. The Extracellular segment spans residues 33-157 (ALYIQKIPEQ…PSTHLPTNAG (125 aa)). N-linked (GlcNAc...) asparagine glycosylation is present at Asn-104. Residues 158–178 (ILAATIIGSLAAGALLISCIA) traverse the membrane as a helical segment. Over 179 to 300 (YLLVTRNWRG…APYCQLVPTS (122 aa)) the chain is Cytoplasmic. A disordered region spans residues 259 to 291 (SINPARPLPTPPHLQAEPENHQYQQDLLNPDPA).

Belongs to the immunoglobulin superfamily. CEA family. As to expression, ubiquitous with highest expression in prostate, uterus, fetal brain, mammary gland, adrenal gland, skeletal muscle, small intestine, and kidney, and lower expression in lung, cerebellum, testis, liver, pancreas, bone marrow and ovary.

Its subcellular location is the membrane. The chain is Cell adhesion molecule CEACAM19 from Homo sapiens (Human).